The primary structure comprises 466 residues: Cysteine--tRNA ligase (466 aa).

C29 is a Zn(2+) binding site. A 'HIGH' region motif is present at residues A31–H41. 3 residues coordinate Zn(2+): C208, H233, and E237. The 'KMSKS' region motif lies at K264–S268. An ATP-binding site is contributed by K267.

Belongs to the class-I aminoacyl-tRNA synthetase family. Monomer. Requires Zn(2+) as cofactor.

The protein localises to the cytoplasm. The catalysed reaction is tRNA(Cys) + L-cysteine + ATP = L-cysteinyl-tRNA(Cys) + AMP + diphosphate. The chain is Cysteine--tRNA ligase from Streptomyces avermitilis (strain ATCC 31267 / DSM 46492 / JCM 5070 / NBRC 14893 / NCIMB 12804 / NRRL 8165 / MA-4680).